Consider the following 322-residue polypeptide: MNADAVQQYQHRTVLLDEAVDALALGGERANGVYVDGTFGRGGHSRKILQQLGSGARLLAFDKDTQAIANAATIDDQRFEIAHDSFATLSEALAVRGIKQVDGVLLDLGISSPQVDDATRGFSFRADGPLDMRMDTTRGMSAAEWLATETEQKIEKVIREYGEERFAFQIAKAIVARRAVEPISSTRQLAEIVARTVKTREKGKDPATRTFQAIRIFINQELEELEVVLNEAYRYLAPHGRLVVISFHSLEDRIVKQFMAGKANVPQPDRRLPIRAIDLPQPEMKLLSRVKPSAAEISENPRARSAVMRVAERLSPAARVVQ.

Residues 42-44 (GGH), Asp62, Phe86, Asp107, and Gln114 contribute to the S-adenosyl-L-methionine site.

The protein belongs to the methyltransferase superfamily. RsmH family.

The protein localises to the cytoplasm. It catalyses the reaction cytidine(1402) in 16S rRNA + S-adenosyl-L-methionine = N(4)-methylcytidine(1402) in 16S rRNA + S-adenosyl-L-homocysteine + H(+). Its function is as follows. Specifically methylates the N4 position of cytidine in position 1402 (C1402) of 16S rRNA. The polypeptide is Ribosomal RNA small subunit methyltransferase H (Janthinobacterium sp. (strain Marseille) (Minibacterium massiliensis)).